Consider the following 549-residue polypeptide: Protein EPD2 (549 aa).

The first 20 residues, 1–20 (MISVIKSLLTLSVLSTLAAA), serve as a signal peptide directing secretion. N-linked (GlcNAc...) asparagine glycosylation is present at N41. C82 and C111 are oxidised to a cystine. Residues N173 and N261 are each glycosylated (N-linked (GlcNAc...) asparagine). 5 disulfides stabilise this stretch: C224–C358, C242–C273, C381–C432, C390–C456, and C409–C414. N-linked (GlcNAc...) asparagine glycosylation occurs at N467. Residues 470–518 (ASTSCSAAGGRGLQSGRRSSTTRGGSSSSRSSSSSSSSSTGSGSSNAGI) form a disordered region. The span at 484–514 (SGRRSSTTRGGSSSSRSSSSSSSSSTGSGSS) shows a compositional bias: low complexity.

Belongs to the glycosyl hydrolase 72 family.

The protein localises to the cell membrane. This Candida maltosa (Yeast) protein is Protein EPD2 (EPD2).